Here is a 393-residue protein sequence, read N- to C-terminus: Putative N(4)-(beta-N-acetylglucosaminyl)-L-asparaginase GH22932 (393 aa).

Residues 15–41 (ALKPITNSSSDTITPNPNLITTSRGSS) form a disordered region. Over residues 19-41 (ITNSSSDTITPNPNLITTSRGSS) the composition is skewed to polar residues. Disulfide bonds link Cys100–Cys105 and Cys199–Cys215. The active-site Nucleophile is Thr246. Substrate is bound by residues 274–277 (RVGD) and 297–300 (TGDG). Cys357 and Cys381 form a disulfide bridge.

This sequence belongs to the Ntn-hydrolase family. As to quaternary structure, heterotetramer of two alpha and two beta chains arranged as a dimer of alpha/beta heterodimers. Post-translationally, cleaved into an alpha and beta chain by autocatalysis; this activates the enzyme. The N-terminal residue of the beta subunit is responsible for the nucleophile hydrolase activity.

The catalysed reaction is N(4)-(beta-N-acetyl-D-glucosaminyl)-L-asparagine + H2O = N-acetyl-beta-D-glucosaminylamine + L-aspartate + H(+). Cleaves the GlcNAc-Asn bond which joins oligosaccharides to the peptide of asparagine-linked glycoproteins. This Drosophila grimshawi (Hawaiian fruit fly) protein is Putative N(4)-(beta-N-acetylglucosaminyl)-L-asparaginase GH22932.